Reading from the N-terminus, the 125-residue chain is MANLEKIVEDLSALTVLEAAELAKMLEEKWGVSAAAPVAVAAAGGAAPAAAAEEKTEFDVVLTEAGAKKIEVIKLVREVVPALGLKEAKDLVEGAPKTVKEAVSKADAEELKKKFEAAGAKVELK.

The protein belongs to the bacterial ribosomal protein bL12 family. Homodimer. Part of the ribosomal stalk of the 50S ribosomal subunit. Forms a multimeric L10(L12)X complex, where L10 forms an elongated spine to which 2 to 4 L12 dimers bind in a sequential fashion. Binds GTP-bound translation factors.

Forms part of the ribosomal stalk which helps the ribosome interact with GTP-bound translation factors. Is thus essential for accurate translation. The sequence is that of Large ribosomal subunit protein bL12 from Hyphomonas neptunium (strain ATCC 15444).